Reading from the N-terminus, the 332-residue chain is Tetraacyldisaccharide 4'-kinase (332 aa).

An ATP-binding site is contributed by T58 to T65.

It belongs to the LpxK family.

It carries out the reaction a lipid A disaccharide + ATP = a lipid IVA + ADP + H(+). Its pathway is glycolipid biosynthesis; lipid IV(A) biosynthesis; lipid IV(A) from (3R)-3-hydroxytetradecanoyl-[acyl-carrier-protein] and UDP-N-acetyl-alpha-D-glucosamine: step 6/6. Functionally, transfers the gamma-phosphate of ATP to the 4'-position of a tetraacyldisaccharide 1-phosphate intermediate (termed DS-1-P) to form tetraacyldisaccharide 1,4'-bis-phosphate (lipid IVA). The sequence is that of Tetraacyldisaccharide 4'-kinase from Shewanella piezotolerans (strain WP3 / JCM 13877).